Reading from the N-terminus, the 357-residue chain is MGRFSNADGPGDDADEREVTPALTVGEGDIDASLRPRSLGEFIGQPRVREQLQLVLEGAKNRGGTPDHILLSGPPGLGKTSLAMIIAAELGSSLRVTSGPALERAGDLAAMLSNLIEGDVLFIDEIHRIARPAEEMLYLAMEDFRVDVVVGKGPGATSIPLEVAPFTLVGATTRSGALTGPLRDRFGFTAHMDFYEPAELERVLARSAGILGIELGAEAGAEIARRSRGTPRIANRLLRRVRDYAEVRADGVITRDIAKYALEVYDVDELGLDRLDRAVLSALTRSFGGGPVGVSTLAVAVGEEATTVEEVCEPFLVRAGMIARTPRGRVATAQAWKHLGMTPPAGAGGLGQVGLFE.

A disordered region spans residues 1–27 (MGRFSNADGPGDDADEREVTPALTVGE). Residues 1-195 (MGRFSNADGP…FGFTAHMDFY (195 aa)) are large ATPase domain (RuvB-L). ATP-binding positions include Leu34, Arg35, Gly76, Lys79, Thr80, Ser81, 142-144 (EDF), Arg185, Tyr195, and Arg232. Residue Thr80 participates in Mg(2+) binding. The tract at residues 196–266 (EPAELERVLA…IAKYALEVYD (71 aa)) is small ATPAse domain (RuvB-S). The interval 269–357 (ELGLDRLDRA…GGLGQVGLFE (89 aa)) is head domain (RuvB-H). DNA-binding residues include Arg324 and Arg329.

Belongs to the RuvB family. In terms of assembly, homohexamer. Forms an RuvA(8)-RuvB(12)-Holliday junction (HJ) complex. HJ DNA is sandwiched between 2 RuvA tetramers; dsDNA enters through RuvA and exits via RuvB. An RuvB hexamer assembles on each DNA strand where it exits the tetramer. Each RuvB hexamer is contacted by two RuvA subunits (via domain III) on 2 adjacent RuvB subunits; this complex drives branch migration. In the full resolvosome a probable DNA-RuvA(4)-RuvB(12)-RuvC(2) complex forms which resolves the HJ.

The protein localises to the cytoplasm. It catalyses the reaction ATP + H2O = ADP + phosphate + H(+). Functionally, the RuvA-RuvB-RuvC complex processes Holliday junction (HJ) DNA during genetic recombination and DNA repair, while the RuvA-RuvB complex plays an important role in the rescue of blocked DNA replication forks via replication fork reversal (RFR). RuvA specifically binds to HJ cruciform DNA, conferring on it an open structure. The RuvB hexamer acts as an ATP-dependent pump, pulling dsDNA into and through the RuvAB complex. RuvB forms 2 homohexamers on either side of HJ DNA bound by 1 or 2 RuvA tetramers; 4 subunits per hexamer contact DNA at a time. Coordinated motions by a converter formed by DNA-disengaged RuvB subunits stimulates ATP hydrolysis and nucleotide exchange. Immobilization of the converter enables RuvB to convert the ATP-contained energy into a lever motion, pulling 2 nucleotides of DNA out of the RuvA tetramer per ATP hydrolyzed, thus driving DNA branch migration. The RuvB motors rotate together with the DNA substrate, which together with the progressing nucleotide cycle form the mechanistic basis for DNA recombination by continuous HJ branch migration. Branch migration allows RuvC to scan DNA until it finds its consensus sequence, where it cleaves and resolves cruciform DNA. The sequence is that of Holliday junction branch migration complex subunit RuvB from Mycolicibacterium gilvum (strain PYR-GCK) (Mycobacterium gilvum (strain PYR-GCK)).